We begin with the raw amino-acid sequence, 478 residues long: Nuclear distribution protein PAC1 (478 aa).

In terms of domain architecture, LisH spans 9–41; it reads QAEELHKAMIAYLLSANLPKSAAALREELADSV. A coiled-coil region spans residues 60–87; that stretch reads TSVVRLQKKIMDLESRNNALQSELDSAT. WD repeat units lie at residues 113–154, 156–196, 200–247, 250–289, 292–352, 354–393, 398–439, and 440–477; these read SHRE…RTIK, HTKA…KNIR, GHDH…CVKT, GHVDWVRDVVASPDGRFLFSAGNDQVARLWDVSSGETKST, GHEH…IKTL, GHDNWVRALAFHPGGKYLLSVSDDKTLRCWDLTQECKCVR, AHGH…GASA, and INGVVPTGKKEDPGGGPMMGIRCVIATGSVDLKVRVFA.

The protein belongs to the WD repeat LIS1/nudF family. Self-associates. Interacts with NDL1 and dynein.

It localises to the cytoplasm. Its subcellular location is the cytoskeleton. The protein localises to the spindle pole. Functionally, positively regulates the activity of the minus-end directed microtubule motor protein dynein. May enhance dynein-mediated microtubule sliding by targeting dynein to the microtubule plus end. Required for nuclear migration during vegetative growth as well as development. Required for retrograde early endosome (EE) transport from the hyphal tip. Required for localization of dynein to the mitotic spindle poles. Recruits additional proteins to the dynein complex at SPBs. The chain is Nuclear distribution protein PAC1 from Paracoccidioides brasiliensis (strain Pb03).